Here is a 220-residue protein sequence, read N- to C-terminus: Small ribosomal subunit protein uS2 (220 aa).

Belongs to the universal ribosomal protein uS2 family.

The sequence is that of Small ribosomal subunit protein uS2 from Methanococcus maripaludis (strain DSM 14266 / JCM 13030 / NBRC 101832 / S2 / LL).